Reading from the N-terminus, the 317-residue chain is SWI/SNF-related matrix-associated actin-dependent regulator of chromatin subfamily E member 1-related (317 aa).

A compositionally biased stretch (low complexity) spans 1-17 (MSHGPKQPGAAAAPAGG). The interval 1 to 71 (MSHGPKQPGA…RKKILPNGPK (71 aa)) is disordered. Lys-31 participates in a covalent cross-link: Glycyl lysine isopeptide (Lys-Gly) (interchain with G-Cter in SUMO2). Over residues 31–52 (KQERGEGPRAGEKGSHEEEPVK) the composition is skewed to basic and acidic residues. Residues 53-65 (KRGWPKGKKRKKI) show a composition bias toward basic residues. Positions 70–138 (PKAPVTGYVR…QYMKELRAYQ (69 aa)) form a DNA-binding region, HMG box. Residue Ser-160 is modified to Phosphoserine. Positions 190–257 (EEFLDQNKAR…LQQQLQAVRQ (68 aa)) form a coiled coil.

Component of a BHC histone deacetylase complex that contains HDAC1, HDAC2, HMG20B/BRAF35, KDM1A, RCOR1/CoREST and PHF21A/BHC80. The BHC complex may also contain ZMYM2, ZNF217, ZMYM3, GSE1 and GTF2I. Interacts with the BRCA2 tumor suppressor protein. Interacts with DTNB. Ubiquitously expressed in adult tissues.

It is found in the nucleus. It localises to the chromosome. Functionally, required for correct progression through G2 phase of the cell cycle and entry into mitosis. Required for RCOR1/CoREST mediated repression of neuronal specific gene promoters. The protein is SWI/SNF-related matrix-associated actin-dependent regulator of chromatin subfamily E member 1-related (HMG20B) of Homo sapiens (Human).